We begin with the raw amino-acid sequence, 431 residues long: Female gametocyte surface protein P47 (431 aa).

The signal sequence occupies residues 1–20 (MKGFTGASIIVFYLIKGYLS). One can recognise a 6-Cys 1 domain in the interval 26 to 178 (NGYVCDFKFN…GLVKIILNNQ (153 aa)). Intrachain disulfides connect Cys30-Cys55, Cys70-Cys145, and Cys88-Cys143. An N-linked (GlcNAc...) asparagine glycan is attached at Asn45. Residue Asn239 is glycosylated (N-linked (GlcNAc...) asparagine). A 6-Cys 2 domain is found at 278–413 (NIDGCDFTVP…MELKISSSKN (136 aa)). Cystine bridges form between Cys282–Cys309, Cys326–Cys395, and Cys335–Cys393. The GPI-anchor amidated serine moiety is linked to residue Ser409. Positions 410 to 431 (SSKNIFISFILLSIIVSIFYLF) are cleaved as a propeptide — removed in mature form.

It is found in the cell surface. The protein localises to the cell membrane. Its function is as follows. Required for female fertility. In Plasmodium berghei (strain Anka), this protein is Female gametocyte surface protein P47 (PB47).